A 325-amino-acid chain; its full sequence is Protease HtpX homolog 2 (325 aa).

A run of 2 helical transmembrane segments spans residues 10-30 (LNMALATLGITLLGFALALAV) and 41-61 (VGLILSILIFIFFLNIIQWLF). A Zn(2+)-binding site is contributed by His-147. The active site involves Glu-148. His-151 lines the Zn(2+) pocket. 2 consecutive transmembrane segments (helical) span residues 159 to 179 (LLMAVGLIPALIYYLGWWLFW) and 196 to 216 (LVFLLGIIMMAVSFVFQLLVL). A Zn(2+)-binding site is contributed by Glu-223.

It belongs to the peptidase M48B family. The cofactor is Zn(2+).

It localises to the cell membrane. The protein is Protease HtpX homolog 2 of Saccharolobus solfataricus (strain ATCC 35092 / DSM 1617 / JCM 11322 / P2) (Sulfolobus solfataricus).